We begin with the raw amino-acid sequence, 469 residues long: GTPase Der (469 aa).

2 EngA-type G domains span residues 3–167 (PTVA…PDEV) and 175–348 (PKFA…RAAM). GTP is bound by residues 9-16 (GRPNVGKS), 56-60 (DTGGF), 119-122 (NKAE), 181-188 (GRPNVGKS), 228-232 (DTAGV), and 293-296 (NKWD). The region spanning 349–433 (SKLATPKLTR…PLRVQYKSSE (85 aa)) is the KH-like domain. Residues 429-469 (YKSSENPFDNDEKDKPRAKPKPMSKMRGREKEVRYGKNSKK) form a disordered region.

It belongs to the TRAFAC class TrmE-Era-EngA-EngB-Septin-like GTPase superfamily. EngA (Der) GTPase family. As to quaternary structure, associates with the 50S ribosomal subunit.

Its function is as follows. GTPase that plays an essential role in the late steps of ribosome biogenesis. This Chromobacterium violaceum (strain ATCC 12472 / DSM 30191 / JCM 1249 / CCUG 213 / NBRC 12614 / NCIMB 9131 / NCTC 9757 / MK) protein is GTPase Der.